The primary structure comprises 349 residues: Fe(3+) ions import ATP-binding protein FbpC (349 aa).

An ABC transporter domain is found at 7–237; sequence LVLKNVTKAF…PNSLFLANFM (231 aa). ATP is bound at residue 39-46; that stretch reads GPSGCGKT.

The protein belongs to the ABC transporter superfamily. Fe(3+) ion importer (TC 3.A.1.10) family. In terms of assembly, the complex is composed of two ATP-binding proteins (FbpC), two transmembrane proteins (FbpB) and a solute-binding protein (FbpA).

It localises to the cell inner membrane. The enzyme catalyses Fe(3+)(out) + ATP + H2O = Fe(3+)(in) + ADP + phosphate + H(+). Part of the ABC transporter complex FbpABC involved in Fe(3+) ions import. Responsible for energy coupling to the transport system. The chain is Fe(3+) ions import ATP-binding protein FbpC from Pasteurella multocida (strain Pm70).